The following is a 194-amino-acid chain: GTP cyclohydrolase 1 (194 aa).

The Zn(2+) site is built by Cys-83, His-86, and Cys-155.

The protein belongs to the GTP cyclohydrolase I family. As to quaternary structure, toroid-shaped homodecamer, composed of two pentamers of five dimers.

The catalysed reaction is GTP + H2O = 7,8-dihydroneopterin 3'-triphosphate + formate + H(+). It participates in cofactor biosynthesis; 7,8-dihydroneopterin triphosphate biosynthesis; 7,8-dihydroneopterin triphosphate from GTP: step 1/1. The sequence is that of GTP cyclohydrolase 1 (folE) from Streptococcus pyogenes serotype M1.